The primary structure comprises 212 residues: External core antigen (212 aa).

Positions 1–19 (MQLFPLCLIISCSCPTVQA) are cleaved as a signal peptide. Residues 25 to 27 (GWL) form an HBEAG region. A disordered region spans residues 165 to 212 (NAPILSTLPETTVVRRRGRSPRRRTPSPRRRRSQSPRRRRSQSRESQC). The span at 178–205 (VRRRGRSPRRRTPSPRRRRSQSPRRRRS) shows a compositional bias: basic residues. One copy of the 1; half-length repeat lies at 184–190 (SPRRRTP). Residues 184-206 (SPRRRTPSPRRRRSQSPRRRRSQ) form a 3 X 8 AA repeats of S-P-R-R-R-R-S-Q region. 2 tandem repeats follow at residues 191–198 (SPRRRRSQ) and 199–206 (SPRRRRSQ).

This sequence belongs to the orthohepadnavirus precore antigen family. Homodimerizes. Post-translationally, phosphorylated. Cleaved by host furin.

The protein resides in the secreted. It is found in the host nucleus. In terms of biological role, may regulate immune response to the intracellular capsid in acting as a T-cell tolerogen, by having an immunoregulatory effect which prevents destruction of infected cells by cytotoxic T-cells. This immune regulation may predispose to chronicity during perinatal infections and prevent severe liver injury during adult infections. The chain is External core antigen from Hepatitis B virus genotype C subtype ayr (isolate Human/Japan/Okamoto/-) (HBV-C).